The following is a 316-amino-acid chain: N-acetylmuramic acid 6-phosphate etherase (316 aa).

The tract at residues 1–23 (MAGFDPTLQPSDDRGHLLTEQSN) is disordered. The SIS domain maps to 66–229 (ISKRLSSGGR…STTVMVRLGK (164 aa)). Glu-94 functions as the Proton donor in the catalytic mechanism. Glu-125 is a catalytic residue.

Belongs to the GCKR-like family. MurNAc-6-P etherase subfamily. In terms of assembly, homodimer.

It catalyses the reaction N-acetyl-D-muramate 6-phosphate + H2O = N-acetyl-D-glucosamine 6-phosphate + (R)-lactate. It functions in the pathway amino-sugar metabolism; N-acetylmuramate degradation. Functionally, specifically catalyzes the cleavage of the D-lactyl ether substituent of MurNAc 6-phosphate, producing GlcNAc 6-phosphate and D-lactate. The sequence is that of N-acetylmuramic acid 6-phosphate etherase from Synechococcus sp. (strain CC9902).